The following is a 219-amino-acid chain: MSEITIGVLSLQGDFEPHINHFIKLQIPSLNIIQVRNVHDLGLCDGLVIPGGESTTVRRCCAYENDTLYNALVHFIHVLKKPIWGTCAGCILLSKNVENIKLYSNFGNKFSFGGLDITICRNFYGSQNDSFICSLNIISDSSAFKKDLTAACIRAPYIREILSDEVKVLATFSHESYGPNIIAAVEQNNCLGTVFHPELLPHTAFQQYFYEKVKNYKYS.

L-glutamine is bound at residue G52–S54. C87 serves as the catalytic Nucleophile. Residues R121 and I153–R154 contribute to the L-glutamine site. Active-site charge relay system residues include H196 and E198.

It belongs to the glutaminase PdxT/SNO family. In the presence of Pdx1, forms a dodecamer of heterodimers. Only shows activity in the heterodimer.

It is found in the cytoplasm. The catalysed reaction is aldehydo-D-ribose 5-phosphate + D-glyceraldehyde 3-phosphate + L-glutamine = pyridoxal 5'-phosphate + L-glutamate + phosphate + 3 H2O + H(+). The enzyme catalyses L-glutamine + H2O = L-glutamate + NH4(+). Its pathway is cofactor biosynthesis; pyridoxal 5'-phosphate biosynthesis. Its function is as follows. Catalyzes the hydrolysis of glutamine to glutamate and ammonia as part of the biosynthesis of pyridoxal 5'-phosphate. The resulting ammonia molecule is channeled to the active site of Pdx1. The polypeptide is Pyridoxal 5'-phosphate synthase subunit PDX2 (Plasmodium falciparum (isolate 3D7)).